A 373-amino-acid chain; its full sequence is 4-hydroxy-3-methylbut-2-en-1-yl diphosphate synthase (flavodoxin) (373 aa).

The [4Fe-4S] cluster site is built by cysteine 270, cysteine 273, cysteine 305, and glutamate 312.

The protein belongs to the IspG family. The cofactor is [4Fe-4S] cluster.

It catalyses the reaction (2E)-4-hydroxy-3-methylbut-2-enyl diphosphate + oxidized [flavodoxin] + H2O + 2 H(+) = 2-C-methyl-D-erythritol 2,4-cyclic diphosphate + reduced [flavodoxin]. The protein operates within isoprenoid biosynthesis; isopentenyl diphosphate biosynthesis via DXP pathway; isopentenyl diphosphate from 1-deoxy-D-xylulose 5-phosphate: step 5/6. Its function is as follows. Converts 2C-methyl-D-erythritol 2,4-cyclodiphosphate (ME-2,4cPP) into 1-hydroxy-2-methyl-2-(E)-butenyl 4-diphosphate. This chain is 4-hydroxy-3-methylbut-2-en-1-yl diphosphate synthase (flavodoxin), found in Erwinia tasmaniensis (strain DSM 17950 / CFBP 7177 / CIP 109463 / NCPPB 4357 / Et1/99).